The following is a 268-amino-acid chain: HTH-type transcriptional activator RhaS (268 aa).

An HTH araC/xylS-type domain is found at 171-268 (RQMIRWLENN…YSIAPRELRI (98 aa)). 2 DNA-binding regions (H-T-H motif) span residues 188-209 (EELAEKFALPIRTLHRYIKSQT) and 236-259 (IINIAYDCGFNDSSYFSTCFKNEY).

As to quaternary structure, binds DNA as a dimer.

The protein localises to the cytoplasm. In terms of biological role, activates expression of the rhaBAD and rhaT operons. The sequence is that of HTH-type transcriptional activator RhaS from Mannheimia succiniciproducens (strain KCTC 0769BP / MBEL55E).